The chain runs to 72 residues: Large ribosomal subunit protein bL31 (72 aa).

The Zn(2+) site is built by Cys-16, Cys-18, Cys-38, and Cys-41.

This sequence belongs to the bacterial ribosomal protein bL31 family. Type A subfamily. Part of the 50S ribosomal subunit. Zn(2+) serves as cofactor.

Functionally, binds the 23S rRNA. The polypeptide is Large ribosomal subunit protein bL31 (Vibrio campbellii (strain ATCC BAA-1116)).